A 133-amino-acid chain; its full sequence is Small ribosomal subunit protein uS8 (133 aa).

The protein belongs to the universal ribosomal protein uS8 family. In terms of assembly, part of the 30S ribosomal subunit. Contacts proteins S5 and S12.

One of the primary rRNA binding proteins, it binds directly to 16S rRNA central domain where it helps coordinate assembly of the platform of the 30S subunit. The chain is Small ribosomal subunit protein uS8 from Chlamydia trachomatis serovar A (strain ATCC VR-571B / DSM 19440 / HAR-13).